A 255-amino-acid chain; its full sequence is Myogenic factor 5 (255 aa).

The bHLH domain occupies 83 to 134 (DRRKAATMRERRRLKKVNQAFDTLKRCTTTNPNQRLPKVEILRNAIRYIESL). Residues 217–249 (SEQPGLPLQDPASLSPVASTDSQPATPGASSSR) form a disordered region. Positions 232–249 (PVASTDSQPATPGASSSR) are enriched in polar residues.

In terms of assembly, efficient DNA binding requires dimerization with another bHLH protein.

The protein localises to the nucleus. Functionally, acts as a transcriptional activator that promotes transcription of muscle-specific target genes and plays a role in muscle differentiation. Together with MYOG and MYOD1, co-occupies muscle-specific gene promoter core region during myogenesis. Induces fibroblasts to differentiate into myoblasts. Probable sequence specific DNA-binding protein. The polypeptide is Myogenic factor 5 (MYF5) (Bos taurus (Bovine)).